The chain runs to 299 residues: Oxygen-dependent coproporphyrinogen-III oxidase (299 aa).

Serine 92 is a substrate binding site. Residues histidine 96 and histidine 106 each contribute to the Mn(2+) site. The active-site Proton donor is histidine 106. 108 to 110 (NVR) provides a ligand contact to substrate. Positions 145 and 175 each coordinate Mn(2+). The interval 240-275 (YVEFNLVWDRGTLFGLQTGGRTESILMSMPPLVRWE) is important for dimerization. Residue 258–260 (GGR) participates in substrate binding.

Belongs to the aerobic coproporphyrinogen-III oxidase family. In terms of assembly, homodimer. Mn(2+) serves as cofactor.

Its subcellular location is the cytoplasm. It carries out the reaction coproporphyrinogen III + O2 + 2 H(+) = protoporphyrinogen IX + 2 CO2 + 2 H2O. The protein operates within porphyrin-containing compound metabolism; protoporphyrin-IX biosynthesis; protoporphyrinogen-IX from coproporphyrinogen-III (O2 route): step 1/1. In terms of biological role, involved in the heme biosynthesis. Catalyzes the aerobic oxidative decarboxylation of propionate groups of rings A and B of coproporphyrinogen-III to yield the vinyl groups in protoporphyrinogen-IX. This Escherichia coli (strain K12 / MC4100 / BW2952) protein is Oxygen-dependent coproporphyrinogen-III oxidase.